Here is a 270-residue protein sequence, read N- to C-terminus: Urease accessory protein UreD (270 aa).

The protein belongs to the UreD family. UreD, UreF and UreG form a complex that acts as a GTP-hydrolysis-dependent molecular chaperone, activating the urease apoprotein by helping to assemble the nickel containing metallocenter of UreC. The UreE protein probably delivers the nickel.

It is found in the cytoplasm. Its function is as follows. Required for maturation of urease via the functional incorporation of the urease nickel metallocenter. The sequence is that of Urease accessory protein UreD from Synechocystis sp. (strain ATCC 27184 / PCC 6803 / Kazusa).